A 179-amino-acid polypeptide reads, in one-letter code: Adenine phosphoribosyltransferase (179 aa).

Belongs to the purine/pyrimidine phosphoribosyltransferase family. In terms of assembly, homodimer.

Its subcellular location is the cytoplasm. The enzyme catalyses AMP + diphosphate = 5-phospho-alpha-D-ribose 1-diphosphate + adenine. Its pathway is purine metabolism; AMP biosynthesis via salvage pathway; AMP from adenine: step 1/1. Catalyzes a salvage reaction resulting in the formation of AMP, that is energically less costly than de novo synthesis. This is Adenine phosphoribosyltransferase from Helicobacter pylori (strain J99 / ATCC 700824) (Campylobacter pylori J99).